Reading from the N-terminus, the 483-residue chain is Glycogen synthase kinase-3 alpha (483 aa).

Positions 1 to 15 (MSGGGPSGGGPGGSG) are enriched in gly residues. A disordered region spans residues 1–96 (MSGGGPSGGG…PPPGVKLGRD (96 aa)). Ser2 carries the N-acetylserine modification. At Ser2 the chain carries Phosphoserine. A Phosphoserine; by PKB/AKT1 modification is found at Ser21. Gly residues predominate over residues 25-82 (PGGGGGGGGGGPGGSASGPGGTGGGKASVGAMGGGVGASSSGGGPSGSGGGGSGGPGA). 3 positions are modified to phosphoserine: Ser72, Ser77, and Ser97. Positions 119–403 (YTDIKVIGNG…PLEACAHSFF (285 aa)) constitute a Protein kinase domain. ATP contacts are provided by residues 125 to 133 (IGNGSFGVV) and Lys148. Asp244 acts as the Proton acceptor in catalysis. The residue at position 279 (Tyr279) is a Phosphotyrosine. Residues 443 to 483 (PHLRSPSGPATLTSSSQALTETQTGQDWQAPDATPTLTNSS) are disordered. Residues 450 to 469 (GPATLTSSSQALTETQTGQD) show a composition bias toward polar residues.

Belongs to the protein kinase superfamily. CMGC Ser/Thr protein kinase family. GSK-3 subfamily. Monomer. Interacts with ARRB2, AXIN1 and CTNNB1/beta-catenin. Interacts with CTNND2. Interacts with LMBR1L. Interacts with DDX3X. Interacts with TNFRSF10B. Post-translationally, phosphorylated by AKT1 at Ser-21: upon insulin-mediated signaling, the activated PKB/AKT1 protein kinase phosphorylates and deactivates GSK3A, resulting in the dephosphorylation and activation of GYS1. Activated by phosphorylation at Tyr-279.

It catalyses the reaction L-seryl-[tau protein] + ATP = O-phospho-L-seryl-[tau protein] + ADP + H(+). The catalysed reaction is L-threonyl-[tau protein] + ATP = O-phospho-L-threonyl-[tau protein] + ADP + H(+). It carries out the reaction L-seryl-[protein] + ATP = O-phospho-L-seryl-[protein] + ADP + H(+). The enzyme catalyses L-threonyl-[protein] + ATP = O-phospho-L-threonyl-[protein] + ADP + H(+). Its activity is regulated as follows. Activated by phosphorylation at Tyr-279. In response to insulin, inhibited by phosphorylation at Ser-21 by PKB/AKT1; phosphorylation at this site causes a conformational change, preventing access of substrates to the active site. Inhibited by lithium. Functionally, constitutively active protein kinase that acts as a negative regulator in the hormonal control of glucose homeostasis, Wnt signaling and regulation of transcription factors and microtubules, by phosphorylating and inactivating glycogen synthase (GYS1 or GYS2), CTNNB1/beta-catenin, APC and AXIN1. Requires primed phosphorylation of the majority of its substrates. Contributes to insulin regulation of glycogen synthesis by phosphorylating and inhibiting GYS1 activity and hence glycogen synthesis. Regulates glycogen metabolism in liver, but not in muscle. May also mediate the development of insulin resistance by regulating activation of transcription factors. In Wnt signaling, regulates the level and transcriptional activity of nuclear CTNNB1/beta-catenin. Facilitates amyloid precursor protein (APP) processing and the generation of APP-derived amyloid plaques found in Alzheimer disease. May be involved in the regulation of replication in pancreatic beta-cells. Is necessary for the establishment of neuronal polarity and axon outgrowth. Through phosphorylation of the anti-apoptotic protein MCL1, may control cell apoptosis in response to growth factors deprivation. Acts as a regulator of autophagy by mediating phosphorylation of KAT5/TIP60 under starvation conditions, activating KAT5/TIP60 acetyltransferase activity and promoting acetylation of key autophagy regulators, such as ULK1 and RUBCNL/Pacer. Negatively regulates extrinsic apoptotic signaling pathway via death domain receptors. Promotes the formation of an anti-apoptotic complex, made of DDX3X, BRIC2 and GSK3B, at death receptors, including TNFRSF10B. The anti-apoptotic function is most effective with weak apoptotic signals and can be overcome by stronger stimulation. This Rattus norvegicus (Rat) protein is Glycogen synthase kinase-3 alpha (Gsk3a).